An 87-amino-acid chain; its full sequence is Beta-defensin 109 (87 aa).

The first 22 residues, 1–22 (MRLHLLLLILLLFSILLSPVRG), serve as a signal peptide directing secretion. 3 cysteine pairs are disulfide-bonded: C31–C59, C38–C53, and C43–C60.

Belongs to the beta-defensin family.

The protein resides in the secreted. Has antibacterial activity. This is Beta-defensin 109 (DEFB109) from Pan troglodytes (Chimpanzee).